A 318-amino-acid polypeptide reads, in one-letter code: Acetyl-coenzyme A carboxylase carboxyl transferase subunit alpha (318 aa).

Positions 32 to 293 (NLSDELERLR…KERLVSQLDR (262 aa)) constitute a CoA carboxyltransferase C-terminal domain.

Belongs to the AccA family. Acetyl-CoA carboxylase is a heterohexamer composed of biotin carboxyl carrier protein (AccB), biotin carboxylase (AccC) and two subunits each of ACCase subunit alpha (AccA) and ACCase subunit beta (AccD).

The protein localises to the cytoplasm. It catalyses the reaction N(6)-carboxybiotinyl-L-lysyl-[protein] + acetyl-CoA = N(6)-biotinyl-L-lysyl-[protein] + malonyl-CoA. It participates in lipid metabolism; malonyl-CoA biosynthesis; malonyl-CoA from acetyl-CoA: step 1/1. Its function is as follows. Component of the acetyl coenzyme A carboxylase (ACC) complex. First, biotin carboxylase catalyzes the carboxylation of biotin on its carrier protein (BCCP) and then the CO(2) group is transferred by the carboxyltransferase to acetyl-CoA to form malonyl-CoA. The polypeptide is Acetyl-coenzyme A carboxylase carboxyl transferase subunit alpha (Saccharophagus degradans (strain 2-40 / ATCC 43961 / DSM 17024)).